We begin with the raw amino-acid sequence, 179 residues long: Pyridoxal 5'-phosphate synthase subunit PdxT (179 aa).

An L-glutamine-binding site is contributed by 48–50 (GES). C79 serves as the catalytic Nucleophile. Residues R101 and 127–128 (IR) contribute to the L-glutamine site. Catalysis depends on charge relay system residues H163 and E165.

Belongs to the glutaminase PdxT/SNO family. In terms of assembly, in the presence of PdxS, forms a dodecamer of heterodimers. Only shows activity in the heterodimer.

The catalysed reaction is aldehydo-D-ribose 5-phosphate + D-glyceraldehyde 3-phosphate + L-glutamine = pyridoxal 5'-phosphate + L-glutamate + phosphate + 3 H2O + H(+). It catalyses the reaction L-glutamine + H2O = L-glutamate + NH4(+). It participates in cofactor biosynthesis; pyridoxal 5'-phosphate biosynthesis. Its function is as follows. Catalyzes the hydrolysis of glutamine to glutamate and ammonia as part of the biosynthesis of pyridoxal 5'-phosphate. The resulting ammonia molecule is channeled to the active site of PdxS. The polypeptide is Pyridoxal 5'-phosphate synthase subunit PdxT (Francisella tularensis subsp. holarctica (strain FTNF002-00 / FTA)).